Reading from the N-terminus, the 250-residue chain is Phosphoribosylaminoimidazole-succinocarboxamide synthase (250 aa).

It belongs to the SAICAR synthetase family.

The enzyme catalyses 5-amino-1-(5-phospho-D-ribosyl)imidazole-4-carboxylate + L-aspartate + ATP = (2S)-2-[5-amino-1-(5-phospho-beta-D-ribosyl)imidazole-4-carboxamido]succinate + ADP + phosphate + 2 H(+). Its pathway is purine metabolism; IMP biosynthesis via de novo pathway; 5-amino-1-(5-phospho-D-ribosyl)imidazole-4-carboxamide from 5-amino-1-(5-phospho-D-ribosyl)imidazole-4-carboxylate: step 1/2. The protein is Phosphoribosylaminoimidazole-succinocarboxamide synthase of Picosynechococcus sp. (strain ATCC 27264 / PCC 7002 / PR-6) (Agmenellum quadruplicatum).